The primary structure comprises 156 residues: Inner membrane protein YlaC (156 aa).

The Cytoplasmic segment spans residues 1 to 35 (MTEIQRLLTETIESLNTREKRDNKPRFSISFIRKH). A helical transmembrane segment spans residues 36 to 56 (PGLFIGMYVAFFATLAVMLQS). Topologically, residues 57-58 (ET) are periplasmic. The helical transmembrane segment at 59–79 (LSGSVWLLVVLFILLNGFFFF) threads the bilayer. The Cytoplasmic portion of the chain corresponds to 80 to 156 (DVYPRYRYED…FTLARAESTS (77 aa)).

The protein localises to the cell inner membrane. The polypeptide is Inner membrane protein YlaC (ylaC) (Escherichia coli (strain K12)).